The chain runs to 520 residues: Cobyric acid synthase (520 aa).

The GATase cobBQ-type domain occupies 275 to 453; it reads VLRVAVIRLP…WHGVLENDAF (179 aa). Cys356 (nucleophile) is an active-site residue. His445 is an active-site residue.

Belongs to the CobB/CobQ family. CobQ subfamily.

It participates in cofactor biosynthesis; adenosylcobalamin biosynthesis. In terms of biological role, catalyzes amidations at positions B, D, E, and G on adenosylcobyrinic A,C-diamide. NH(2) groups are provided by glutamine, and one molecule of ATP is hydrogenolyzed for each amidation. This Frankia casuarinae (strain DSM 45818 / CECT 9043 / HFP020203 / CcI3) protein is Cobyric acid synthase.